The chain runs to 220 residues: Iron-sulfur cluster repair protein YtfE (220 aa).

It belongs to the RIC family. YtfE subfamily. As to quaternary structure, homodimer.

Its subcellular location is the cytoplasm. In terms of biological role, di-iron-containing protein involved in the repair of iron-sulfur clusters damaged by oxidative and nitrosative stress conditions. The polypeptide is Iron-sulfur cluster repair protein YtfE (Escherichia coli O6:K15:H31 (strain 536 / UPEC)).